The sequence spans 755 residues: Bacteriophytochrome (755 aa).

Cys-24 is a binding site for a tetrapyrrole. In terms of domain architecture, PAS spans 26–94; sequence REPIHIPGSI…LQAALPPGCP (69 aa). The tract at residues 95–504 is chromophore binding domain; the sequence is DALQYRATLD…RDTLTGALGE (410 aa). Positions 152-316 constitute a GAF domain; sequence NLRALAEVAT…YLGRLLSLQV (165 aa). In terms of domain architecture, Histidine kinase spans 529–747; it reads VISHHMQEPV…TFRCWLPDAG (219 aa). A Phosphohistidine; by autocatalysis modification is found at His-532.

The protein in the N-terminal section; belongs to the phytochrome family. Contains one covalently linked tetrapyrrole chromophore. Lacks the cysteine conserved in plant phytochromes (at the position of Met-259) that binds chromophore. An engineered sequence used for X-ray crystallography forms a thioether link to biliverdin through Cys-24. The natural sequence can bind phycocyanobilin and phytochromobilin in vitro, but the identity of the natural chromophore is unknown.

It catalyses the reaction ATP + protein L-histidine = ADP + protein N-phospho-L-histidine.. Photoreceptor which exists in two forms that are reversibly interconvertible by light: the R form that absorbs maximally in the red region of the spectrum and the FR form that absorbs maximally in the far-red region. Also has a slight blue shift for the far-red maximum. Could also absorb green light. May participate in regulating pigment synthesis like the carotenoid deinoxanthin which could protect the bacterium from intense visible light. In Deinococcus radiodurans (strain ATCC 13939 / DSM 20539 / JCM 16871 / CCUG 27074 / LMG 4051 / NBRC 15346 / NCIMB 9279 / VKM B-1422 / R1), this protein is Bacteriophytochrome (bphP).